A 357-amino-acid chain; its full sequence is Ribosomal RNA large subunit methyltransferase M (357 aa).

Residues serine 183, 216-219 (APGG), aspartate 235, aspartate 255, and aspartate 271 contribute to the S-adenosyl-L-methionine site. Residue lysine 300 is the Proton acceptor of the active site.

This sequence belongs to the class I-like SAM-binding methyltransferase superfamily. RNA methyltransferase RlmE family. RlmM subfamily. As to quaternary structure, monomer.

Its subcellular location is the cytoplasm. The enzyme catalyses cytidine(2498) in 23S rRNA + S-adenosyl-L-methionine = 2'-O-methylcytidine(2498) in 23S rRNA + S-adenosyl-L-homocysteine + H(+). Functionally, catalyzes the 2'-O-methylation at nucleotide C2498 in 23S rRNA. The chain is Ribosomal RNA large subunit methyltransferase M from Pseudomonas fluorescens (strain Pf0-1).